A 146-amino-acid chain; its full sequence is MKLHELKPAEGSRKVRNRVGRGIGSGNGKTAGRGHKGQNARSGGGVRLGFEGGQTPLFRRLPKRGFTNINRKEFTIVNLSTLNRFEDGTEVTPELLLETGVISKLNDGVKILASGAVEKKLTVKAHKFSSSAKEAIEAAGGSVEVI.

The span at 1-13 shows a compositional bias: basic and acidic residues; it reads MKLHELKPAEGSR. The tract at residues 1–51 is disordered; sequence MKLHELKPAEGSRKVRNRVGRGIGSGNGKTAGRGHKGQNARSGGGVRLGFE. 2 stretches are compositionally biased toward gly residues: residues 21–31 and 42–51; these read RGIGSGNGKTA and SGGGVRLGFE.

This sequence belongs to the universal ribosomal protein uL15 family. In terms of assembly, part of the 50S ribosomal subunit.

Its function is as follows. Binds to the 23S rRNA. This chain is Large ribosomal subunit protein uL15, found in Bacillus mycoides (strain KBAB4) (Bacillus weihenstephanensis).